Reading from the N-terminus, the 257-residue chain is MSASRLERRIREAQAAGRPALIPFLTAGFPTPERFWDELEALDAAGADIIEVGVPFSDPVADGPVVAAASQRALESGVTLRWIMDGLAARKARLRAGLVLMGYLNPFMQYGFERFVTDAADAGVAGCIIPDLPLDEDADLRALLAARGMDLIALVGPNTGEGRMREYAAVASGYVYVVSVMGTTGVRDGLPVEVADTLARARQCFSIPVALGFGISRPAQLEGLSHPPDAVIFGSALLRHLDAGGDAASFMKAWAER.

Active-site proton acceptor residues include glutamate 51 and aspartate 62.

The protein belongs to the TrpA family. Tetramer of two alpha and two beta chains.

The enzyme catalyses (1S,2R)-1-C-(indol-3-yl)glycerol 3-phosphate + L-serine = D-glyceraldehyde 3-phosphate + L-tryptophan + H2O. The protein operates within amino-acid biosynthesis; L-tryptophan biosynthesis; L-tryptophan from chorismate: step 5/5. Functionally, the alpha subunit is responsible for the aldol cleavage of indoleglycerol phosphate to indole and glyceraldehyde 3-phosphate. The chain is Tryptophan synthase alpha chain from Nitratidesulfovibrio vulgaris (strain DP4) (Desulfovibrio vulgaris).